A 274-amino-acid polypeptide reads, in one-letter code: Large ribosomal subunit protein uL2 (274 aa).

2 disordered regions span residues 35 to 60 (EPQHQKSGRNNNGHITTRHKGGGHKH) and 224 to 274 (VMNP…RRKK). Residues 50–60 (TTRHKGGGHKH) show a composition bias toward basic residues. The span at 229–246 (DHPHGGGEGKTGEGRHAV) shows a compositional bias: basic and acidic residues.

This sequence belongs to the universal ribosomal protein uL2 family. As to quaternary structure, part of the 50S ribosomal subunit. Forms a bridge to the 30S subunit in the 70S ribosome.

Its function is as follows. One of the primary rRNA binding proteins. Required for association of the 30S and 50S subunits to form the 70S ribosome, for tRNA binding and peptide bond formation. It has been suggested to have peptidyltransferase activity; this is somewhat controversial. Makes several contacts with the 16S rRNA in the 70S ribosome. The polypeptide is Large ribosomal subunit protein uL2 (Delftia acidovorans (strain DSM 14801 / SPH-1)).